A 294-amino-acid chain; its full sequence is Elongation factor Ts (294 aa).

Positions 80 to 83 are involved in Mg(2+) ion dislocation from EF-Tu; that stretch reads TDFV.

Belongs to the EF-Ts family.

Its subcellular location is the cytoplasm. Its function is as follows. Associates with the EF-Tu.GDP complex and induces the exchange of GDP to GTP. It remains bound to the aminoacyl-tRNA.EF-Tu.GTP complex up to the GTP hydrolysis stage on the ribosome. In Polynucleobacter necessarius subsp. necessarius (strain STIR1), this protein is Elongation factor Ts.